A 458-amino-acid polypeptide reads, in one-letter code: Argininosuccinate lyase (458 aa).

Belongs to the lyase 1 family. Argininosuccinate lyase subfamily.

It localises to the cytoplasm. It catalyses the reaction 2-(N(omega)-L-arginino)succinate = fumarate + L-arginine. It functions in the pathway amino-acid biosynthesis; L-arginine biosynthesis; L-arginine from L-ornithine and carbamoyl phosphate: step 3/3. The chain is Argininosuccinate lyase from Geotalea daltonii (strain DSM 22248 / JCM 15807 / FRC-32) (Geobacter daltonii).